A 135-amino-acid polypeptide reads, in one-letter code: Small ribosomal subunit protein eS24A (135 aa).

Position 2 is an N-acetylserine (Ser2). At Ser14 the chain carries Phosphoserine. A Glycyl lysine isopeptide (Lys-Gly) (interchain with G-Cter in ubiquitin) cross-link involves residue Lys21. Ser56 is modified (phosphoserine). Residues 102 to 135 (KASRQQRKQKKNRDKKIFGTGKRLAKKVARRNAD) form a disordered region. Basic residues-rich tracts occupy residues 105 to 115 (RQQRKQKKNRD) and 124 to 135 (RLAKKVARRNAD).

It belongs to the eukaryotic ribosomal protein eS24 family. In terms of assembly, component of the small ribosomal subunit (SSU). Mature yeast ribosomes consist of a small (40S) and a large (60S) subunit. The 40S small subunit contains 1 molecule of ribosomal RNA (18S rRNA) and 33 different proteins (encoded by 57 genes). The large 60S subunit contains 3 rRNA molecules (25S, 5.8S and 5S rRNA) and 46 different proteins (encoded by 81 genes). N-terminally acetylated by acetyltransferase NatA. Also partially acetylated by NatC.

Its subcellular location is the cytoplasm. Functionally, component of the ribosome, a large ribonucleoprotein complex responsible for the synthesis of proteins in the cell. The small ribosomal subunit (SSU) binds messenger RNAs (mRNAs) and translates the encoded message by selecting cognate aminoacyl-transfer RNA (tRNA) molecules. The large subunit (LSU) contains the ribosomal catalytic site termed the peptidyl transferase center (PTC), which catalyzes the formation of peptide bonds, thereby polymerizing the amino acids delivered by tRNAs into a polypeptide chain. The nascent polypeptides leave the ribosome through a tunnel in the LSU and interact with protein factors that function in enzymatic processing, targeting, and the membrane insertion of nascent chains at the exit of the ribosomal tunnel. The polypeptide is Small ribosomal subunit protein eS24A (Saccharomyces cerevisiae (strain ATCC 204508 / S288c) (Baker's yeast)).